The chain runs to 370 residues: Histidinol-phosphate aminotransferase 3 (370 aa).

The residue at position 229 (Lys229) is an N6-(pyridoxal phosphate)lysine.

The protein belongs to the class-II pyridoxal-phosphate-dependent aminotransferase family. Histidinol-phosphate aminotransferase subfamily. As to quaternary structure, homodimer. It depends on pyridoxal 5'-phosphate as a cofactor.

The catalysed reaction is L-histidinol phosphate + 2-oxoglutarate = 3-(imidazol-4-yl)-2-oxopropyl phosphate + L-glutamate. Its pathway is amino-acid biosynthesis; L-histidine biosynthesis; L-histidine from 5-phospho-alpha-D-ribose 1-diphosphate: step 7/9. This Rhizobium meliloti (strain 1021) (Ensifer meliloti) protein is Histidinol-phosphate aminotransferase 3 (hisC3).